Here is a 300-residue protein sequence, read N- to C-terminus: GTPase Era (300 aa).

In terms of domain architecture, Era-type G spans 6–173 (KSGFLSIIGR…VDVLKEHLPE (168 aa)). The segment at 14-21 (GRPNVGKS) is G1. GTP is bound at residue 14 to 21 (GRPNVGKS). The interval 40–44 (QTTRN) is G2. The interval 61–64 (DTPG) is G3. GTP is bound by residues 61–65 (DTPGI) and 123–126 (NKID). Residues 123–126 (NKID) are G4. The interval 152-154 (ISA) is G5. In terms of domain architecture, KH type-2 spans 204–281 (TKEEVPHSIA…YLELWIKVKK (78 aa)).

This sequence belongs to the TRAFAC class TrmE-Era-EngA-EngB-Septin-like GTPase superfamily. Era GTPase family. As to quaternary structure, monomer.

It localises to the cytoplasm. The protein resides in the cell membrane. An essential GTPase that binds both GDP and GTP, with rapid nucleotide exchange. Plays a role in 16S rRNA processing and 30S ribosomal subunit biogenesis and possibly also in cell cycle regulation and energy metabolism. The chain is GTPase Era from Oceanobacillus iheyensis (strain DSM 14371 / CIP 107618 / JCM 11309 / KCTC 3954 / HTE831).